The following is a 355-amino-acid chain: DNA polymerase IV (355 aa).

Positions 14-198 (IIHVDMDAFF…LPVEKFHGVG (185 aa)) constitute a UmuC domain. Mg(2+) is bound by residues D18 and D116. E117 is an active-site residue.

This sequence belongs to the DNA polymerase type-Y family. Monomer. It depends on Mg(2+) as a cofactor.

It localises to the cytoplasm. The catalysed reaction is DNA(n) + a 2'-deoxyribonucleoside 5'-triphosphate = DNA(n+1) + diphosphate. Its function is as follows. Poorly processive, error-prone DNA polymerase involved in untargeted mutagenesis. Copies undamaged DNA at stalled replication forks, which arise in vivo from mismatched or misaligned primer ends. These misaligned primers can be extended by PolIV. Exhibits no 3'-5' exonuclease (proofreading) activity. May be involved in translesional synthesis, in conjunction with the beta clamp from PolIII. The protein is DNA polymerase IV of Streptococcus suis (strain 98HAH33).